Reading from the N-terminus, the 158-residue chain is NAD(P)H-quinone oxidoreductase subunit J, chloroplastic (158 aa).

The protein belongs to the complex I 30 kDa subunit family. As to quaternary structure, NDH is composed of at least 16 different subunits, 5 of which are encoded in the nucleus.

It localises to the plastid. The protein resides in the chloroplast thylakoid membrane. It carries out the reaction a plastoquinone + NADH + (n+1) H(+)(in) = a plastoquinol + NAD(+) + n H(+)(out). The enzyme catalyses a plastoquinone + NADPH + (n+1) H(+)(in) = a plastoquinol + NADP(+) + n H(+)(out). In terms of biological role, NDH shuttles electrons from NAD(P)H:plastoquinone, via FMN and iron-sulfur (Fe-S) centers, to quinones in the photosynthetic chain and possibly in a chloroplast respiratory chain. The immediate electron acceptor for the enzyme in this species is believed to be plastoquinone. Couples the redox reaction to proton translocation, and thus conserves the redox energy in a proton gradient. The polypeptide is NAD(P)H-quinone oxidoreductase subunit J, chloroplastic (Lemna minor (Common duckweed)).